The chain runs to 154 residues: 6,7-dimethyl-8-ribityllumazine synthase (154 aa).

5-amino-6-(D-ribitylamino)uracil-binding positions include Phe-23, 57-59 (AYE), and 81-83 (AVI). 86 to 87 (GT) provides a ligand contact to (2S)-2-hydroxy-3-oxobutyl phosphate. His-89 (proton donor) is an active-site residue. Phe-114 provides a ligand contact to 5-amino-6-(D-ribitylamino)uracil. Arg-128 provides a ligand contact to (2S)-2-hydroxy-3-oxobutyl phosphate.

This sequence belongs to the DMRL synthase family. As to quaternary structure, forms an icosahedral capsid composed of 60 subunits, arranged as a dodecamer of pentamers.

It carries out the reaction (2S)-2-hydroxy-3-oxobutyl phosphate + 5-amino-6-(D-ribitylamino)uracil = 6,7-dimethyl-8-(1-D-ribityl)lumazine + phosphate + 2 H2O + H(+). The protein operates within cofactor biosynthesis; riboflavin biosynthesis; riboflavin from 2-hydroxy-3-oxobutyl phosphate and 5-amino-6-(D-ribitylamino)uracil: step 1/2. Its function is as follows. Catalyzes the formation of 6,7-dimethyl-8-ribityllumazine by condensation of 5-amino-6-(D-ribitylamino)uracil with 3,4-dihydroxy-2-butanone 4-phosphate. This is the penultimate step in the biosynthesis of riboflavin. The polypeptide is 6,7-dimethyl-8-ribityllumazine synthase (Acidithiobacillus ferrooxidans (strain ATCC 23270 / DSM 14882 / CIP 104768 / NCIMB 8455) (Ferrobacillus ferrooxidans (strain ATCC 23270))).